A 348-amino-acid polypeptide reads, in one-letter code: Mannonate dehydratase (348 aa).

It belongs to the mannonate dehydratase family. Fe(2+) is required as a cofactor. Requires Mn(2+) as cofactor.

The catalysed reaction is D-mannonate = 2-dehydro-3-deoxy-D-gluconate + H2O. The protein operates within carbohydrate metabolism; pentose and glucuronate interconversion. Functionally, catalyzes the dehydration of D-mannonate. In Streptococcus agalactiae serotype III (strain NEM316), this protein is Mannonate dehydratase.